Consider the following 218-residue polypeptide: NAD(P)H-quinone oxidoreductase subunit U, chloroplastic (218 aa).

Residues 1-53 (MASLSTITQPSLVHIPGESVLHHVPSTCSFPWKPTINTKRIICSPARNSSEVS) constitute a chloroplast transit peptide. Residues 47-72 (RNSSEVSAEAETEGGSSTAVDEAPKE) are disordered. The 65-residue stretch at 95 to 159 (DHYGRLGIFR…EERRMYDWSL (65 aa)) folds into the J domain. The chain crosses the membrane as a helical span at residues 197-217 (ILGYFIGAWLVLGVALSVAFN).

As to quaternary structure, part of the chloroplast NDH complex, composed of a mixture of chloroplast and nucleus encoded subunits. Component of the electron donor-binding subcomplex, at least composed of NDHS, NDHT and NDHU.

Its subcellular location is the plastid. It localises to the chloroplast thylakoid membrane. The enzyme catalyses a plastoquinone + NADH + (n+1) H(+)(in) = a plastoquinol + NAD(+) + n H(+)(out). It catalyses the reaction a plastoquinone + NADPH + (n+1) H(+)(in) = a plastoquinol + NADP(+) + n H(+)(out). Functionally, NDH shuttles electrons from NAD(P)H:plastoquinone, via FMN and iron-sulfur (Fe-S) centers, to quinones in the photosynthetic chain and possibly in a chloroplast respiratory chain. The immediate electron acceptor for the enzyme in this species is believed to be plastoquinone. Couples the redox reaction to proton translocation, and thus conserves the redox energy in a proton gradient. This is NAD(P)H-quinone oxidoreductase subunit U, chloroplastic from Arabidopsis thaliana (Mouse-ear cress).